Consider the following 247-residue polypeptide: MSSRRGRRPALLVFADSLAYYGPTGGLPADDPRIWPNIVASQLDWDLELIGRIGWTCRDVWWAATQDPRAWAALPRAGAVIFATGGMDSLPSVLPTALRELIRYVRPSWLRRWVRDGYAWVQPRLSPVARAALPPHLTAEYLEKTRGAIDFNRPGIPIIASLPSVHIAETYGKAHHGRAGTVAAITEWAQHHDIPLVDLKAAVAEQILSGYGNRDGIHWNFEAHQAVAELMLKALAEAGVPNEKSRG.

It belongs to the OctT acyltransferase family. In terms of assembly, homotetramer.

The catalysed reaction is (2R)-2-O-[alpha-D-glucopyranosyl-(1-&gt;6)-alpha-D-glucopyranosyl]-glycerate + octanoyl-CoA = (2R)-2-O-[6-O-octanoyl-alpha-D-glucopyranosyl-(1-&gt;6)-alpha-D-glucopyranosyl]-glycerate + CoA. Sugar octanoyltransferase likely involved in the biosynthesis of mycobacterial methylglucose lipopolysaccharide (MGLP). Catalyzes the transfer of an octanoyl group from octanoyl-CoA to the C6 OH of the second glucose in diglucosylglycerate (DGG). DGG is the preferred acceptor, but to a lesser extent, GG (glucosylglycerate) can also be used as substrate. DGG and GG are the two earliest intermediates in MGLP biosynthesis. This Mycobacterium tuberculosis (strain ATCC 25618 / H37Rv) protein is Diglucosylglycerate octanoyltransferase.